A 174-amino-acid chain; its full sequence is Adenylosuccinate synthetase (174 aa).

Residues 13 to 19 (GDEGKGK) and 41 to 43 (GHT) contribute to the GTP site. D14 functions as the Proton acceptor in the catalytic mechanism. D14 and G41 together coordinate Mg(2+). IMP is bound by residues 14–17 (DEGK), 39–42 (NAGH), T130, and R144. The active-site Proton donor is the H42.

It belongs to the adenylosuccinate synthetase family. In terms of assembly, homodimer. Requires Mg(2+) as cofactor.

Its subcellular location is the cytoplasm. It carries out the reaction IMP + L-aspartate + GTP = N(6)-(1,2-dicarboxyethyl)-AMP + GDP + phosphate + 2 H(+). The protein operates within purine metabolism; AMP biosynthesis via de novo pathway; AMP from IMP: step 1/2. Its function is as follows. Plays an important role in the de novo pathway of purine nucleotide biosynthesis. Catalyzes the first committed step in the biosynthesis of AMP from IMP. The chain is Adenylosuccinate synthetase from Stutzerimonas stutzeri (Pseudomonas stutzeri).